Reading from the N-terminus, the 449-residue chain is Xaa-Pro dipeptidase (449 aa).

Asp-246, Asp-257, His-345, Glu-390, and Glu-429 together coordinate Mn(2+).

The protein belongs to the peptidase M24B family. Bacterial-type prolidase subfamily. Requires Mn(2+) as cofactor.

It catalyses the reaction Xaa-L-Pro dipeptide + H2O = an L-alpha-amino acid + L-proline. Functionally, splits dipeptides with a prolyl residue in the C-terminal position. The polypeptide is Xaa-Pro dipeptidase (Yersinia enterocolitica serotype O:8 / biotype 1B (strain NCTC 13174 / 8081)).